Consider the following 514-residue polypeptide: 2,3-bisphosphoglycerate-independent phosphoglycerate mutase (514 aa).

The Mn(2+) site is built by Asp-14 and Ser-64. Ser-64 acts as the Phosphoserine intermediate in catalysis. Substrate-binding positions include His-125, 155–156 (RD), Arg-187, Arg-193, 263–266 (RADR), and Lys-336. Asp-403, His-407, Asp-444, His-445, and His-463 together coordinate Mn(2+).

The protein belongs to the BPG-independent phosphoglycerate mutase family. Monomer. Mn(2+) is required as a cofactor.

The catalysed reaction is (2R)-2-phosphoglycerate = (2R)-3-phosphoglycerate. Its pathway is carbohydrate degradation; glycolysis; pyruvate from D-glyceraldehyde 3-phosphate: step 3/5. Functionally, catalyzes the interconversion of 2-phosphoglycerate and 3-phosphoglycerate. The polypeptide is 2,3-bisphosphoglycerate-independent phosphoglycerate mutase (Salmonella choleraesuis (strain SC-B67)).